The chain runs to 428 residues: Serine--tRNA ligase (428 aa).

231–233 (TSE) provides a ligand contact to L-serine. Residues 262–264 (RRE) and valine 278 contribute to the ATP site. Position 285 (glutamate 285) interacts with L-serine. 349-352 (ELTS) contributes to the ATP binding site. Threonine 384 contacts L-serine.

Belongs to the class-II aminoacyl-tRNA synthetase family. Type-1 seryl-tRNA synthetase subfamily. In terms of assembly, homodimer. The tRNA molecule binds across the dimer.

The protein resides in the cytoplasm. The catalysed reaction is tRNA(Ser) + L-serine + ATP = L-seryl-tRNA(Ser) + AMP + diphosphate + H(+). It catalyses the reaction tRNA(Sec) + L-serine + ATP = L-seryl-tRNA(Sec) + AMP + diphosphate + H(+). The protein operates within aminoacyl-tRNA biosynthesis; selenocysteinyl-tRNA(Sec) biosynthesis; L-seryl-tRNA(Sec) from L-serine and tRNA(Sec): step 1/1. Catalyzes the attachment of serine to tRNA(Ser). Is also able to aminoacylate tRNA(Sec) with serine, to form the misacylated tRNA L-seryl-tRNA(Sec), which will be further converted into selenocysteinyl-tRNA(Sec). This is Serine--tRNA ligase from Bifidobacterium longum subsp. infantis (strain ATCC 15697 / DSM 20088 / JCM 1222 / NCTC 11817 / S12).